A 602-amino-acid polypeptide reads, in one-letter code: 4-hydroxy-3-methylbut-2-en-1-yl diphosphate synthase (flavodoxin) (602 aa).

4 residues coordinate [4Fe-4S] cluster: Cys508, Cys511, Cys543, and Glu550.

This sequence belongs to the IspG family. It depends on [4Fe-4S] cluster as a cofactor.

It catalyses the reaction (2E)-4-hydroxy-3-methylbut-2-enyl diphosphate + oxidized [flavodoxin] + H2O + 2 H(+) = 2-C-methyl-D-erythritol 2,4-cyclic diphosphate + reduced [flavodoxin]. It participates in isoprenoid biosynthesis; isopentenyl diphosphate biosynthesis via DXP pathway; isopentenyl diphosphate from 1-deoxy-D-xylulose 5-phosphate: step 5/6. Its function is as follows. Converts 2C-methyl-D-erythritol 2,4-cyclodiphosphate (ME-2,4cPP) into 1-hydroxy-2-methyl-2-(E)-butenyl 4-diphosphate. This chain is 4-hydroxy-3-methylbut-2-en-1-yl diphosphate synthase (flavodoxin), found in Chlamydia trachomatis serovar L2b (strain UCH-1/proctitis).